The following is a 642-amino-acid chain: 1-deoxy-D-xylulose-5-phosphate synthase (642 aa).

Thiamine diphosphate-binding positions include histidine 79 and alanine 120–serine 122. Aspartate 151 provides a ligand contact to Mg(2+). Thiamine diphosphate contacts are provided by residues glycine 152 to serine 153, asparagine 180, tyrosine 290, and glutamate 372. Asparagine 180 provides a ligand contact to Mg(2+).

This sequence belongs to the transketolase family. DXPS subfamily. Homodimer. Mg(2+) is required as a cofactor. Requires thiamine diphosphate as cofactor.

The enzyme catalyses D-glyceraldehyde 3-phosphate + pyruvate + H(+) = 1-deoxy-D-xylulose 5-phosphate + CO2. The protein operates within metabolic intermediate biosynthesis; 1-deoxy-D-xylulose 5-phosphate biosynthesis; 1-deoxy-D-xylulose 5-phosphate from D-glyceraldehyde 3-phosphate and pyruvate: step 1/1. In terms of biological role, catalyzes the acyloin condensation reaction between C atoms 2 and 3 of pyruvate and glyceraldehyde 3-phosphate to yield 1-deoxy-D-xylulose-5-phosphate (DXP). In Beijerinckia indica subsp. indica (strain ATCC 9039 / DSM 1715 / NCIMB 8712), this protein is 1-deoxy-D-xylulose-5-phosphate synthase.